The sequence spans 337 residues: Tryptophan--tRNA ligase (337 aa).

ATP-binding positions include 9–11 and 17–18; these read RPT and GH. Residues 10-18 carry the 'HIGH' region motif; the sequence is PTGRLHLGH. Asp-137 is an L-tryptophan binding site. Residues 149–151, Leu-187, and 195–199 contribute to the ATP site; these read GKD and KMSKS. The short motif at 195–199 is the 'KMSKS' region element; sequence KMSKS.

The protein belongs to the class-I aminoacyl-tRNA synthetase family. As to quaternary structure, homodimer.

The protein localises to the cytoplasm. It catalyses the reaction tRNA(Trp) + L-tryptophan + ATP = L-tryptophyl-tRNA(Trp) + AMP + diphosphate + H(+). Functionally, catalyzes the attachment of tryptophan to tRNA(Trp). This is Tryptophan--tRNA ligase from Treponema pallidum (strain Nichols).